Here is a 774-residue protein sequence, read N- to C-terminus: Mastermind-like domain-containing protein 1 (774 aa).

Disordered regions lie at residues Ser257–Ala279, Leu310–Leu365, Ala386–Phe421, His442–Phe473, Gly525–His609, Pro656–Ser678, and Leu755–Pro774. Residues Leu331–Ser361 show a composition bias toward pro residues. Residues Ala386–Ala397 are compositionally biased toward polar residues. Low complexity predominate over residues Gln574–His609. Positions Pro656–Asp669 are enriched in polar residues. Ser676 is modified (phosphoserine).

Belongs to the mastermind family. As to expression, expressed in fetal brain, fetal ovary and fetal testis. Expressed in adult brain, ovary, skin, testis, uterus. Highly expressed in skeletal muscle.

Its subcellular location is the nucleus. Transactivates the HES3 promoter independently of NOTCH proteins. HES3 is a non-canonical NOTCH target gene which lacks binding sites for RBPJ. This chain is Mastermind-like domain-containing protein 1 (MAMLD1), found in Homo sapiens (Human).